The sequence spans 362 residues: 3-dehydroquinate synthase (362 aa).

Residues 71-76, 105-109, 129-130, Lys-142, Lys-151, and 169-172 each bind NAD(+); these read DGEQYK, GVVGD, TT, and CLNT. Zn(2+) is bound by residues Glu-184, His-247, and His-264.

It belongs to the sugar phosphate cyclases superfamily. Dehydroquinate synthase family. Co(2+) is required as a cofactor. Requires Zn(2+) as cofactor. NAD(+) serves as cofactor.

The protein resides in the cytoplasm. The enzyme catalyses 7-phospho-2-dehydro-3-deoxy-D-arabino-heptonate = 3-dehydroquinate + phosphate. It functions in the pathway metabolic intermediate biosynthesis; chorismate biosynthesis; chorismate from D-erythrose 4-phosphate and phosphoenolpyruvate: step 2/7. Catalyzes the conversion of 3-deoxy-D-arabino-heptulosonate 7-phosphate (DAHP) to dehydroquinate (DHQ). The chain is 3-dehydroquinate synthase from Enterobacter sp. (strain 638).